The following is a 90-amino-acid chain: DNA-binding protein HU (90 aa).

The tract at residues 57–90 (ARKGVNPQTRKPITIPERKVPKFKPGKALKEKVK) is disordered.

Belongs to the bacterial histone-like protein family.

Histone-like DNA-binding protein which is capable of wrapping DNA to stabilize it, and thus to prevent its denaturation under extreme environmental conditions. The protein is DNA-binding protein HU (hup) of Thermotoga maritima (strain ATCC 43589 / DSM 3109 / JCM 10099 / NBRC 100826 / MSB8).